Here is a 335-residue protein sequence, read N- to C-terminus: Nuclear distribution protein nudE homolog 1 (335 aa).

Positions 1–93 (MEDSGKTFSS…VQHSEGYRQI (93 aa)) are self-association. Residues 18–188 (WKDLAMTYKQ…ELAVQQKQEK (171 aa)) are a coiled coil. Residues 88–156 (EGYRQISALE…ERNAFLESEL (69 aa)) form an interaction with PAFAH1B1 region. The interval 167 to 290 (QRLKDEARDL…QSPNRTGGPA (124 aa)) is interaction with CENPF. A disordered region spans residues 181-246 (AVQQKQEKPR…DDSTGGTPLT (66 aa)). Over residues 204–214 (TAVQATGSVPS) the composition is skewed to polar residues. At Ser-211 the chain carries Phosphoserine. Residues Thr-215 and Thr-228 each carry the phosphothreonine modification. 2 positions are modified to phosphoserine: Ser-231 and Ser-239. Residues Thr-243 and Thr-246 each carry the phosphothreonine modification. Cys-274 is lipidated: S-palmitoyl cysteine; by ZDHHC2, ZDHHC3 and ZDHHC7. The tract at residues 279 to 335 (YDQSPNRTGGPASGRSSKNRDGGERRPSSTSVPLGDKGLDTSCRWLSKSTTRSSSSC) is disordered. Ser-282 is subject to Phosphoserine. Positions 296-305 (KNRDGGERRP) are enriched in basic and acidic residues. Ser-309 carries the post-translational modification Phosphoserine. Residues 325-335 (SKSTTRSSSSC) show a composition bias toward low complexity.

It belongs to the nudE family. In terms of assembly, homodimer. Interacts with CNTRL, LIS1, dynein, SLMAP and TCP1. Interacts with CENPF, dynactin, tubulin gamma, PAFAH1B1, PCM1 and PCNT. Interacts with ZNF365. Interacts with GTP-bound RAB9A and RAB9B; the interaction leads to RAB9-dynein motor tethering. Interacts (via C-terminus) with MCRS1 (via C-terminus); phosphorylation of NDE1 inhibits the interaction. Phosphorylated in mitosis. Phosphorylated in vitro by CDC2. Phosphorylation at Thr-246 is essential for the G2/M transition. Expressed in the neuroepithelium throughout the developing brain, including the cerebral cortex and cerebellum.

Its subcellular location is the cytoplasm. It is found in the cytoskeleton. The protein resides in the microtubule organizing center. The protein localises to the centrosome. It localises to the chromosome. Its subcellular location is the centromere. It is found in the kinetochore. The protein resides in the spindle. The protein localises to the cleavage furrow. It localises to the cytoplasmic vesicle membrane. Functionally, required for centrosome duplication and formation and function of the mitotic spindle. Essential for the development of the cerebral cortex. May regulate the production of neurons by controlling the orientation of the mitotic spindle during division of cortical neuronal progenitors of the proliferative ventricular zone of the brain. Orientation of the division plane perpendicular to the layers of the cortex gives rise to two proliferative neuronal progenitors whereas parallel orientation of the division plane yields one proliferative neuronal progenitor and a postmitotic neuron. A premature shift towards a neuronal fate within the progenitor population may result in an overall reduction in the final number of neurons and an increase in the number of neurons in the deeper layers of the cortex. Acts as a RAB9A/B effector that tethers RAB9-associated late endosomes to the dynein motor for their retrograde transport to the trans-Golgi network. This is Nuclear distribution protein nudE homolog 1 from Homo sapiens (Human).